The following is a 755-amino-acid chain: MEVHNSLHCTAPVLSSLQASASGSGTPKKTAASSAAAQNSKQLLDQLSQQQKAQEEAETHSRRDCDSPASSNSEPEKDLDELRDLNGSLTGSGSVGKSNGSLSGASSTTSAPAGTSTPGSANTNGSASGAASLSVVSATAHLKKRITSSRTPTRKAHRIKFYRNGDRFYPGITIPVSNERYRSFESLYEDLTRLLEENVKIPGAVRTIYDMVGKKITALEELEDGQSYVCSCNNENFKKVDYNTSSQPLANLTLANNSRTSSHRLAKLQRPASPLKNGVLNSIAPVPVGGGAAANGSPLNTSRFSERDSVVHPRIVTLIRNGTKPRRIIRLLLNKRNSPSFDHVLTAITQVVRLDTGYVRKVFTLSGVSVLQLSDFFGSDDVFFAYGTERVNTVEDFKLESEEQRAINAIRKTLRTAGTACKGPKPKMPVKSKKAYPPGELKAQAEAQLQASAAPANEDEEQAALLKSTGVEVAELPAAIRDNYTLSQIIGDGNFAIVLKIKDRQTGIPHALKIIDKSKCKGKEHYIDAEVRVMKKLHHPHIISLIMDVDQDTNMYLVLEYVSGGDLFDAITQVTRFSESQSRIMIRHLGSAMSYLHSMGIVHRDIKPENLLVELDDFGNVVQLKLADFGLACEVTEPLYAVCGTPTYVAPEILLEVGYGLKIDVWAAGIILYILLCGFPPFVAPDNQQEPLFDAIISGVYEFPDPYWSDIGDGVRDLIANMLQSDPDVRFTSEDILDHYWTMGNEEIGCGDYSR.

The segment covering Gln-18 to Lys-52 has biased composition (low complexity). A disordered region spans residues Gln-18–Ser-128. 2 stretches are compositionally biased toward basic and acidic residues: residues Ala-53 to Asp-66 and Glu-74 to Asp-84. Residues Gly-87–Asn-99 are compositionally biased toward polar residues. The span at Gly-100–Ser-128 shows a compositional bias: low complexity. Doublecortin domains are found at residues His-157–Asn-243 and Arg-314–Phe-397. The Protein kinase domain maps to Tyr-484–Thr-742. ATP-binding positions include Ile-490 to Val-498 and Lys-513. Asp-605 (proton acceptor) is an active-site residue.

Belongs to the protein kinase superfamily. CAMK Ser/Thr protein kinase family. CaMK subfamily.

It carries out the reaction L-seryl-[protein] + ATP = O-phospho-L-seryl-[protein] + ADP + H(+). It catalyses the reaction L-threonyl-[protein] + ATP = O-phospho-L-threonyl-[protein] + ADP + H(+). In Drosophila pseudoobscura pseudoobscura (Fruit fly), this protein is Serine/threonine-protein kinase GA29083.